A 946-amino-acid polypeptide reads, in one-letter code: Leucine--tRNA ligase (946 aa).

The short motif at 43–53 (PYPNGTIHIGH) is the 'HIGH' region element. Residues 638–642 (KMSKS) carry the 'KMSKS' region motif. Residue K641 coordinates ATP.

This sequence belongs to the class-I aminoacyl-tRNA synthetase family.

The protein resides in the cytoplasm. It catalyses the reaction tRNA(Leu) + L-leucine + ATP = L-leucyl-tRNA(Leu) + AMP + diphosphate. This chain is Leucine--tRNA ligase, found in Pyrobaculum calidifontis (strain DSM 21063 / JCM 11548 / VA1).